Consider the following 705-residue polypeptide: Ribonuclease R (705 aa).

In terms of domain architecture, RNB spans 240 to 567 (RRDLREQLCF…VHRLLKKALR (328 aa)). Residues 615–696 (GEEFIGIITG…ERARVEFELI (82 aa)) enclose the S1 motif domain.

Belongs to the RNR ribonuclease family. RNase R subfamily.

It is found in the cytoplasm. The catalysed reaction is Exonucleolytic cleavage in the 3'- to 5'-direction to yield nucleoside 5'-phosphates.. 3'-5' exoribonuclease that releases 5'-nucleoside monophosphates and is involved in maturation of structured RNAs. In Aquifex aeolicus (strain VF5), this protein is Ribonuclease R.